The sequence spans 55 residues: UPF0391 membrane protein Neut_2351/Neut_2360 (55 aa).

Helical transmembrane passes span 4–24 and 28–48; these read LAVVFLIIAVIAALLGVTGVA and AEMAWILFVIGIVLAIVFWVL.

This sequence belongs to the UPF0391 family.

It localises to the cell membrane. The polypeptide is UPF0391 membrane protein Neut_2351/Neut_2360 (Nitrosomonas eutropha (strain DSM 101675 / C91 / Nm57)).